The primary structure comprises 75 residues: Small ribosomal subunit protein bS16 (75 aa).

Belongs to the bacterial ribosomal protein bS16 family.

The polypeptide is Small ribosomal subunit protein bS16 (Aliarcobacter butzleri (strain RM4018) (Arcobacter butzleri)).